We begin with the raw amino-acid sequence, 224 residues long: MEHNRQQLRLMQLSSSSLPVGSFTWSQGLEWAVEAGWITTDAEFKRWQIQQMEQSFFCVDLPLFIRLYRACEQNDAVSARRWTAYLLACRETRELREEERNRGAAFTRLIKSWEPDCPQEWLPLFSQSQLCGMAWLGVRWEISAHELALSLGYSWIESAVMAGVKLVPFGQQAAQRLIIELSDHFAAGLEHAWRRGDDELGAATPLSAIASARHETQYSRLFRS.

The protein belongs to the UreF family. UreD, UreF and UreG form a complex that acts as a GTP-hydrolysis-dependent molecular chaperone, activating the urease apoprotein by helping to assemble the nickel containing metallocenter of UreC. The UreE protein probably delivers the nickel.

The protein resides in the cytoplasm. Functionally, required for maturation of urease via the functional incorporation of the urease nickel metallocenter. This chain is Urease accessory protein UreF, found in Enterobacter sp. (strain 638).